Reading from the N-terminus, the 180-residue chain is Large ribosomal subunit protein uL6 (180 aa).

The protein belongs to the universal ribosomal protein uL6 family. In terms of assembly, part of the 50S ribosomal subunit.

Its function is as follows. This protein binds to the 23S rRNA, and is important in its secondary structure. It is located near the subunit interface in the base of the L7/L12 stalk, and near the tRNA binding site of the peptidyltransferase center. The sequence is that of Large ribosomal subunit protein uL6 from Caldanaerobacter subterraneus subsp. tengcongensis (strain DSM 15242 / JCM 11007 / NBRC 100824 / MB4) (Thermoanaerobacter tengcongensis).